The chain runs to 263 residues: Hydroxyethylthiazole kinase 2 (263 aa).

M42 lines the substrate pocket. 2 residues coordinate ATP: K118 and T164. G191 is a binding site for substrate.

Belongs to the Thz kinase family. Mg(2+) serves as cofactor.

The enzyme catalyses 5-(2-hydroxyethyl)-4-methylthiazole + ATP = 4-methyl-5-(2-phosphooxyethyl)-thiazole + ADP + H(+). The protein operates within cofactor biosynthesis; thiamine diphosphate biosynthesis; 4-methyl-5-(2-phosphoethyl)-thiazole from 5-(2-hydroxyethyl)-4-methylthiazole: step 1/1. Its function is as follows. Catalyzes the phosphorylation of the hydroxyl group of 4-methyl-5-beta-hydroxyethylthiazole (THZ). The protein is Hydroxyethylthiazole kinase 2 of Clostridium botulinum (strain Loch Maree / Type A3).